The chain runs to 221 residues: Uracil-DNA glycosylase (221 aa).

The Proton acceptor role is filled by Asp63.

This sequence belongs to the uracil-DNA glycosylase (UDG) superfamily. UNG family.

The protein resides in the cytoplasm. It catalyses the reaction Hydrolyzes single-stranded DNA or mismatched double-stranded DNA and polynucleotides, releasing free uracil.. Its function is as follows. Excises uracil residues from the DNA which can arise as a result of misincorporation of dUMP residues by DNA polymerase or due to deamination of cytosine. This chain is Uracil-DNA glycosylase, found in Blochmanniella floridana.